We begin with the raw amino-acid sequence, 156 residues long: Snaclec A10 (156 aa).

Positions Met1–Ala23 are cleaved as a signal peptide. Disulfide bonds link Cys27–Cys38, Cys55–Cys154, and Cys129–Cys146. Positions Tyr34–Glu155 constitute a C-type lectin domain.

The protein belongs to the snaclec family. Heterodimer; disulfide-linked. In terms of tissue distribution, expressed by the venom gland.

It localises to the secreted. Functionally, interferes with one step of hemostasis (modulation of platelet aggregation, or coagulation cascade, for example). In Macrovipera lebetinus (Levantine viper), this protein is Snaclec A10.